The primary structure comprises 169 residues: Putative esterase F42H10.6 (169 aa).

Belongs to the thioesterase paaI family.

This Caenorhabditis elegans protein is Putative esterase F42H10.6.